A 168-amino-acid polypeptide reads, in one-letter code: ADP-ribosylation factor-like protein 2-binding protein (168 aa).

It belongs to the ARL2BP family.

It is found in the cytoplasm. The protein localises to the mitochondrion intermembrane space. The protein resides in the cytoskeleton. Its subcellular location is the microtubule organizing center. It localises to the centrosome. It is found in the nucleus. The protein localises to the spindle. The protein resides in the cilium basal body. Functionally, plays a role as an effector of the ADP-ribosylation factor-like protein 2, ARL2. The polypeptide is ADP-ribosylation factor-like protein 2-binding protein (arl2bp) (Danio rerio (Zebrafish)).